The chain runs to 187 residues: Large ribosomal subunit protein bL17 (187 aa).

It belongs to the bacterial ribosomal protein bL17 family. In terms of assembly, part of the 50S ribosomal subunit. Contacts protein L32.

The protein is Large ribosomal subunit protein bL17 of Rhodococcus opacus (strain B4).